A 341-amino-acid chain; its full sequence is Serine/threonine-protein kinase PDIK1L (341 aa).

The 327-residue stretch at 8-334 (YDLIREVGRG…LELRLVQIAF (327 aa)) folds into the Protein kinase domain. ATP is bound by residues 14 to 22 (VGRGSYGVV) and lysine 37. Residue aspartate 164 is the Proton acceptor of the active site.

The protein belongs to the protein kinase superfamily. Ser/Thr protein kinase family.

It localises to the nucleus. The catalysed reaction is L-seryl-[protein] + ATP = O-phospho-L-seryl-[protein] + ADP + H(+). It carries out the reaction L-threonyl-[protein] + ATP = O-phospho-L-threonyl-[protein] + ADP + H(+). The chain is Serine/threonine-protein kinase PDIK1L (Pdik1l) from Mus musculus (Mouse).